Reading from the N-terminus, the 541-residue chain is T-complex protein 1 subunit epsilon (541 aa).

Residue Ala2 is modified to N-acetylalanine. Residue Lys20 forms a Glycyl lysine isopeptide (Lys-Gly) (interchain with G-Cter in SUMO2) linkage. Ser26 is subject to Phosphoserine. Residue Gly53 coordinates ADP. Position 53 (Gly53) interacts with ATP. Residue Asp104 coordinates Mg(2+). Residues Gly105, Thr106, Thr107, and Ser175 each contribute to the ADP site. Thr106 and Thr107 together coordinate ATP. Glycyl lysine isopeptide (Lys-Gly) (interchain with G-Cter in SUMO2) cross-links involve residues Lys210, Lys214, Lys265, Lys275, and Lys279. Ser346 carries the post-translational modification Phosphoserine. A Glycyl lysine isopeptide (Lys-Gly) (interchain with G-Cter in SUMO2) cross-link involves residue Lys392. Gly422, Asp492, Glu508, and Lys513 together coordinate ADP. Residue Gly422 participates in ATP binding. Ser539 is subject to Phosphoserine.

Belongs to the TCP-1 chaperonin family. Component of the chaperonin-containing T-complex (TRiC), a hexadecamer composed of two identical back-to-back stacked rings enclosing a protein folding chamber. Each ring is made up of eight different subunits: TCP1/CCT1, CCT2, CCT3, CCT4, CCT5, CCT6A/CCT6, CCT7, CCT8. Interacts with PACRG. Interacts with DNAAF4. Interacts with DLEC1. Interacts with SPMAP2. Post-translationally, ubiquitinated by the DCX(DCAF12) complex specifically recognizes the diglutamate (Glu-Glu) at the C-terminus, leading to its degradation.

It localises to the cytoplasm. The protein resides in the cytoskeleton. It is found in the microtubule organizing center. The protein localises to the centrosome. It catalyses the reaction ATP + H2O = ADP + phosphate + H(+). Component of the chaperonin-containing T-complex (TRiC), a molecular chaperone complex that assists the folding of actin, tubulin and other proteins upon ATP hydrolysis. The TRiC complex mediates the folding of WRAP53/TCAB1, thereby regulating telomere maintenance. As part of the TRiC complex may play a role in the assembly of BBSome, a complex involved in ciliogenesis regulating transports vesicles to the cilia. This is T-complex protein 1 subunit epsilon (CCT5) from Homo sapiens (Human).